The primary structure comprises 266 residues: Tryptophan synthase alpha chain (266 aa).

Catalysis depends on proton acceptor residues Glu-49 and Asp-60.

Belongs to the TrpA family. As to quaternary structure, tetramer of two alpha and two beta chains.

It catalyses the reaction (1S,2R)-1-C-(indol-3-yl)glycerol 3-phosphate + L-serine = D-glyceraldehyde 3-phosphate + L-tryptophan + H2O. It functions in the pathway amino-acid biosynthesis; L-tryptophan biosynthesis; L-tryptophan from chorismate: step 5/5. The alpha subunit is responsible for the aldol cleavage of indoleglycerol phosphate to indole and glyceraldehyde 3-phosphate. This is Tryptophan synthase alpha chain from Shewanella amazonensis (strain ATCC BAA-1098 / SB2B).